We begin with the raw amino-acid sequence, 400 residues long: Enoyl-[acyl-carrier-protein] reductase [NADH] (400 aa).

Residues 48–53 (GASTGY), 74–75 (FE), 111–112 (DA), and 139–140 (LA) each bind NAD(+). Residue Tyr225 coordinates substrate. Tyr235 serves as the catalytic Proton donor. Residues Lys244 and 273-275 (VVT) each bind NAD(+).

Belongs to the TER reductase family. As to quaternary structure, monomer.

It carries out the reaction a 2,3-saturated acyl-[ACP] + NAD(+) = a (2E)-enoyl-[ACP] + NADH + H(+). Its pathway is lipid metabolism; fatty acid biosynthesis. In terms of biological role, involved in the final reduction of the elongation cycle of fatty acid synthesis (FAS II). Catalyzes the reduction of a carbon-carbon double bond in an enoyl moiety that is covalently linked to an acyl carrier protein (ACP). This chain is Enoyl-[acyl-carrier-protein] reductase [NADH], found in Burkholderia multivorans (strain ATCC 17616 / 249).